We begin with the raw amino-acid sequence, 303 residues long: Ribonuclease Z (303 aa).

Zn(2+) contacts are provided by histidine 61, histidine 63, aspartate 65, histidine 66, histidine 139, aspartate 207, and histidine 266. The Proton acceptor role is filled by aspartate 65.

This sequence belongs to the RNase Z family. As to quaternary structure, homodimer. Requires Zn(2+) as cofactor.

It catalyses the reaction Endonucleolytic cleavage of RNA, removing extra 3' nucleotides from tRNA precursor, generating 3' termini of tRNAs. A 3'-hydroxy group is left at the tRNA terminus and a 5'-phosphoryl group is left at the trailer molecule.. Its function is as follows. Zinc phosphodiesterase, which displays some tRNA 3'-processing endonuclease activity. Probably involved in tRNA maturation, by removing a 3'-trailer from precursor tRNA. In Clostridium kluyveri (strain ATCC 8527 / DSM 555 / NBRC 12016 / NCIMB 10680 / K1), this protein is Ribonuclease Z.